A 326-amino-acid chain; its full sequence is MTSAPAAERPAAPAVPRIKWTVVEAVELFEQPFMDLLFRAQQVHRAHFDPNAVQRSTLLSIKTGGCSEDCGYCSQSTRHNTGLDREQLLKVAEVVEHAKAAKAKGASRFCMGAAWRGPKDKDMETVLAMVREVKALGLETCVTLGMLKGDQALQLKEAGLDYYNHNLDTAPEFYGQVITTHTLADRLDTLEQVRGAGINVCSGGIVGMGEGRRSRAGLLVQLANMASPPESVPINNLVPVPGTPLENVDKIDPFEFVRTIAAARIMMPTSFVRLSAGRQQMSDELQALCFMAGANSIFYGDRLLTTDNPDTDRDEALFARLGLRPV.

The Radical SAM core domain occupies 51–275 (NAVQRSTLLS…MMPTSFVRLS (225 aa)). Positions 66, 70, and 73 each coordinate [4Fe-4S] cluster. [2Fe-2S] cluster is bound by residues Cys-110, Cys-141, Cys-201, and Arg-273.

Belongs to the radical SAM superfamily. Biotin synthase family. In terms of assembly, homodimer. [4Fe-4S] cluster serves as cofactor. [2Fe-2S] cluster is required as a cofactor.

It catalyses the reaction (4R,5S)-dethiobiotin + (sulfur carrier)-SH + 2 reduced [2Fe-2S]-[ferredoxin] + 2 S-adenosyl-L-methionine = (sulfur carrier)-H + biotin + 2 5'-deoxyadenosine + 2 L-methionine + 2 oxidized [2Fe-2S]-[ferredoxin]. Its pathway is cofactor biosynthesis; biotin biosynthesis; biotin from 7,8-diaminononanoate: step 2/2. Catalyzes the conversion of dethiobiotin (DTB) to biotin by the insertion of a sulfur atom into dethiobiotin via a radical-based mechanism. The protein is Biotin synthase of Aromatoleum aromaticum (strain DSM 19018 / LMG 30748 / EbN1) (Azoarcus sp. (strain EbN1)).